The chain runs to 1234 residues: Anion exchange protein 2 (1234 aa).

The segment at 1–239 (MSSAPRRPAS…YNLQERRRIG (239 aa)) is disordered. At 1 to 704 (MSSAPRRPAS…SDFRDALDPQ (704 aa)) the chain is on the cytoplasmic side. Basic and acidic residues-rich tracts occupy residues 39–49 (LRTLGVERFEE) and 58–75 (GGEE…EYHR). Basic residues-rich tracts occupy residues 76 to 85 (QSSHHIHHPL) and 94 to 110 (RRRK…RRRP). Phosphoserine is present on serine 113. A compositionally biased stretch (acidic residues) spans 120-133 (TIEEGEEDEDEVGE). 3 positions are modified to phosphoserine: serine 145, serine 171, and serine 173. Residues 207–216 (TAGGDDGGAA) show a composition bias toward gly residues. Serine 240 bears the Phosphoserine mark. The residue at position 254 (threonine 254) is a Phosphothreonine. At lysine 271 the chain carries N6-methyllysine. The interval 287–315 (RKNAKGSTQAAREGREPGPTPRARPRAPH) is disordered. Position 440 is a phosphoserine (serine 440). Positions 446–467 (SLLGHHHAQGTESDPHVTEPLI) are disordered. The next 4 membrane-spanning stretches (helical) occupy residues 705 to 728 (CLAA…GLLG), 734 to 771 (LIGV…LLVF), 791 to 813 (VWIG…SFLV), and 823 to 843 (IFAF…LIKI). A membrane (anion exchange) region spans residues 705 to 1234 (CLAAVIFIYF…DEYNEMPMPV (530 aa)). Over 844-893 (FQEHPLHGCSVSNDSEADSSSNNMTWAATTLAPDNSSASGQERPRGQPNT) the chain is Extracellular. Residues asparagine 856, asparagine 866, and asparagine 878 are each glycosylated (N-linked (GlcNAc...) asparagine). Residues 894–911 (ALLSLVLMAGTFFIAFFL) form a helical membrane-spanning segment. Over 912–926 (RKFKNSRFFPGRIRR) the chain is Cytoplasmic. The next 5 membrane-spanning stretches (helical) occupy residues 927-947 (VIGD…DYSI), 981-1003 (PFPV…LIFM), 1029-1050 (LLLI…LAAA), 1084-1129 (VTGL…IQFY), and 1156-1192 (MHLF…TVPL). Residue cysteine 1166 is the site of S-palmitoyl cysteine attachment.

It belongs to the anion exchanger (TC 2.A.31) family. In terms of tissue distribution, expressed in the parotid and submandibular glands (at protein level). Expressed in the gastric mucosa (at protein level). Expressed in the choroid plexus epithelium (at protein level). Expressed in the liver and gallbladder.

It localises to the apical cell membrane. The protein resides in the basolateral cell membrane. It carries out the reaction hydrogencarbonate(in) + chloride(out) = hydrogencarbonate(out) + chloride(in). Inhibited by 4,4'-diisothiocyanatostilbene-2,2'-disulfonic acid (DIDS). In terms of biological role, sodium-independent anion exchanger which mediates the electroneutral exchange of chloride for bicarbonate ions across the cell membrane. Plays an important role in osteoclast differentiation and function. Regulates bone resorption and calpain-dependent actin cytoskeleton organization in osteoclasts via anion exchange-dependent control of pH. Essential for intracellular pH regulation in CD8(+) T-cells upon CD3 stimulation, modulating CD8(+) T-cell responses. This Rattus norvegicus (Rat) protein is Anion exchange protein 2 (Slc4a2).